Consider the following 435-residue polypeptide: MGIMGSLWPWILTMLSLLGLSMGAPSASRCSGVCSTSVPEGFTPEGSPVFQDKDIPAINQGLISEETPESSFLVEGDIIRPSPFRLLSVTNNKWPKGVGGFVEIPFLLSRKYDELSRRVIMDAFAEFERFTCIRFVAYHGQRDFVSILPMAGCFSGVGRSGGMQVVSLAPTCLRKGRGIVLHELMHVLGFWHEHSRADRDRYIQVNWNEILPGFEINFIKSRSTNMLVPYDYSSVMHYGRFAFSWRGQPTIIPLWTSSVHIGQRWNLSTSDITRVCRLYNCSRSVPDSHGRGFEAQSDGSSLTPASISRLQRLLEALSEESGSSAPSGSRTGGQSIAGLGNSQQGWEHPPQSTFSVGALARPPQMLADASKSGPGAGADSLSLEQFQLAQAPTVPLALFPEARDKPAPIQDAFERLAPLPGGCAPGSHIREVPRD.

The signal sequence occupies residues 1–23 (MGIMGSLWPWILTMLSLLGLSMG). Positions 85-282 (RLLSVTNNKW…TRVCRLYNCS (198 aa)) constitute a Peptidase M12A domain. Cystine bridges form between Cys-132-Cys-281 and Cys-153-Cys-172. His-182 lines the Zn(2+) pocket. Glu-183 is an active-site residue. Zn(2+) contacts are provided by His-186 and His-192. Low complexity predominate over residues 318 to 329 (SEESGSSAPSGS). The tract at residues 318–356 (SEESGSSAPSGSRTGGQSIAGLGNSQQGWEHPPQSTFSV) is disordered. Residues 340-355 (GNSQQGWEHPPQSTFS) are compositionally biased toward polar residues.

Interacts (via N-terminal domain) with SPACA3; the interaction occurs during fertilization. Requires Zn(2+) as cofactor. Ovary-specific. Expressed in secondary, antral and Graafian follicle oocytes. Expressed in the egg cells. Not detected in two-cell embryos. Not detected in naked oocytes, oocytes in primordial or unilaminar primary follicles, or in any other ovarian cells at pre-pubertal, pubertal or adult stages (at protein level). Ovary-specific.

It is found in the cytoplasm. The protein localises to the cell membrane. Its subcellular location is the cytoplasmic vesicle. The protein resides in the secretory vesicle. It localises to the cortical granule. With respect to regulation, inhibited by wide spectrum metalloproteinase inhibitor batimastat (BB-94). Also inhibited by EDTA. Functionally, oocyte-specific oolemmal receptor involved in sperm and egg adhesion and fertilization. Plays a role in the polyspermy inhibition. Probably acts as a protease for the post-fertilization cleavage of ZP2. Cleaves the sperm-binding ZP2 at the surface of the zona pellucida after fertilization and cortical granule exocytosis, rendering the zona pellucida unable to support further sperm binding. The polypeptide is Astacin-like metalloendopeptidase (Mus musculus (Mouse)).